Here is a 516-residue protein sequence, read N- to C-terminus: Nucleolar complex protein 4 homolog (516 aa).

3 helical membrane-spanning segments follow: residues 297–317, 347–367, and 375–395; these read ACDLGGALSLLALNGLFILIH, FFHLADLFLSSSHLPAYLVAA, and LALTAPPEALLMVLPFICNLL.

The protein belongs to the CBF/MAK21 family.

Its subcellular location is the nucleus membrane. The protein resides in the nucleus. The protein localises to the nucleolus. This Homo sapiens (Human) protein is Nucleolar complex protein 4 homolog (NOC4L).